The chain runs to 539 residues: Monocarboxylate transporter 8 (539 aa).

The disordered stretch occupies residues 1-92 (MALQSQASEE…VETRGTARGF (92 aa)). N-acetylalanine is present on alanine 2. The Cytoplasmic portion of the chain corresponds to 2–96 (ALQSQASEEA…GTARGFQPPE (95 aa)). A compositionally biased stretch (acidic residues) spans 31–41 (PESEPEPEPEP). The segment covering 42-64 (EPVPVPPPEPQPEPQPLPDPAPL) has biased composition (pro residues). The chain crosses the membrane as a helical span at residues 97–117 (GGFGWVVVFAATWCNGSIFGI). The Extracellular portion of the chain corresponds to 118–143 (HNSVGILYSMLLEEEKEKNRQVEFQA). The chain crosses the membrane as a helical span at residues 144–164 (AWVGALAMGMIFFCSPIVSIF). Over 165-171 (TDRLGCR) the chain is Cytoplasmic. A helical membrane pass occupies residues 172–192 (ITATAGAAVAFIGLHTSSFTS). The Extracellular segment spans residues 193 to 200 (SLSLRYFT). The chain crosses the membrane as a helical span at residues 201-221 (YGILFGCGCSFAFQPSLVILG). The Cytoplasmic portion of the chain corresponds to 222–229 (HYFQRRLG). The chain crosses the membrane as a helical span at residues 230 to 250 (LANGVVSAGSSIFSMSFPFLI). At 251 to 258 (RMLGDKIK) the chain is on the extracellular side. The chain crosses the membrane as a helical span at residues 259–279 (LAQTFQVLSTFMFVLMLLSLT). Residues 280 to 322 (YRPLLPSSQDTPSKRGVRTLHQRFLAQLRKYFNMRVFRQRTYR) lie on the Cytoplasmic side of the membrane. Residues 323–343 (IWAFGIAAAALGYFVPYVHLM) form a helical membrane-spanning segment. Residues 344–356 (KYVEEEFSEIKET) lie on the Extracellular side of the membrane. Residues 357-377 (WVLLVCIGATSGLGRLVSGHI) traverse the membrane as a helical segment. At 378–386 (SDSIPGLKK) the chain is on the cytoplasmic side. Residues 387 to 407 (IYLQVLSFLLLGLMSMMIPLC) traverse the membrane as a helical segment. At 408–409 (RD) the chain is on the extracellular side. The helical transmembrane segment at 410 to 430 (FGGLIVVCLFLGLCDGFFITI) threads the bilayer. Residues 431-447 (MAPIAFELVGPMQASQA) are Cytoplasmic-facing. Residues 448–468 (IGYLLGMMALPMIAGPPIAGL) form a helical membrane-spanning segment. Residues 469–477 (LRNCFGDYH) lie on the Extracellular side of the membrane. A helical transmembrane segment spans residues 478 to 498 (VAFYFAGVPPIIGAVILFFVP). At 499–539 (LMHQRMFKKEQRDSSKDKMLAPDPDPNGELLPGSPNPEEPI) the chain is on the cytoplasmic side. Over residues 508–518 (EQRDSSKDKML) the composition is skewed to basic and acidic residues. Residues 508–539 (EQRDSSKDKMLAPDPDPNGELLPGSPNPEEPI) are disordered.

The protein belongs to the major facilitator superfamily. Monocarboxylate porter (TC 2.A.1.13) family. Monomer. Homodimer. Homooligomer. As to expression, highly expressed in liver and heart. In adult brain tissue expression is largely confined to endothelial cells of the blood-brain barrier (at protein level).

The protein resides in the cell membrane. Its subcellular location is the apical cell membrane. It catalyses the reaction 3,3',5-triiodo-L-thyronine(out) = 3,3',5-triiodo-L-thyronine(in). The catalysed reaction is L-thyroxine(out) = L-thyroxine(in). It carries out the reaction 3,3',5'-triiodo-L-thyronine(out) = 3,3',5'-triiodo-L-thyronine(in). The enzyme catalyses 3,3'-diiodo-L-thyronine(out) = 3,3'-diiodo-L-thyronine(in). Specific thyroid hormone transmembrane transporter, that mediates both uptake and efflux of thyroid hormones across the cell membrane independently of pH or a Na(+) gradient. Major substrates are the iodothyronines T3 and T4 and to a lesser extent rT3 and 3,3-diiodothyronine (3,3'-T2). Acts as an important mediator of thyroid hormone transport, especially T3, through the blood-brain barrier. The chain is Monocarboxylate transporter 8 (SLC16A2) from Homo sapiens (Human).